The sequence spans 247 residues: ATP synthase subunit a, chloroplastic (247 aa).

5 helical membrane passes run 38-58 (QVLITSWVVIAILLGSATIAV), 95-115 (VPFIGTMFLFIFVSNWSGALL), 134-154 (INTTVALALLTSVAYFYAGLT), 199-219 (LVVVVLVSLVPSVVPIPVMFL), and 220-240 (GLFTSGIQALIFATLAAAYIG).

The protein belongs to the ATPase A chain family. In terms of assembly, F-type ATPases have 2 components, CF(1) - the catalytic core - and CF(0) - the membrane proton channel. CF(1) has five subunits: alpha(3), beta(3), gamma(1), delta(1), epsilon(1). CF(0) has four main subunits: a, b, b' and c.

The protein localises to the plastid. It is found in the chloroplast thylakoid membrane. Its function is as follows. Key component of the proton channel; it plays a direct role in the translocation of protons across the membrane. This Buxus microphylla (Littleleaf boxwood) protein is ATP synthase subunit a, chloroplastic.